The primary structure comprises 165 residues: Large ribosomal subunit protein uL11 (165 aa).

Belongs to the universal ribosomal protein uL11 family.

In terms of biological role, binds directly to 26S ribosomal RNA. This Caenorhabditis briggsae protein is Large ribosomal subunit protein uL11 (rpl-12).